A 63-amino-acid polypeptide reads, in one-letter code: Large ribosomal subunit protein bL32 (63 aa).

The protein belongs to the bacterial ribosomal protein bL32 family.

In Lacticaseibacillus paracasei (strain ATCC 334 / BCRC 17002 / CCUG 31169 / CIP 107868 / KCTC 3260 / NRRL B-441) (Lactobacillus paracasei), this protein is Large ribosomal subunit protein bL32.